A 122-amino-acid polypeptide reads, in one-letter code: Large ribosomal subunit protein uL14 (122 aa).

Belongs to the universal ribosomal protein uL14 family. Part of the 50S ribosomal subunit. Forms a cluster with proteins L3 and L19. In the 70S ribosome, L14 and L19 interact and together make contacts with the 16S rRNA in bridges B5 and B8.

Its function is as follows. Binds to 23S rRNA. Forms part of two intersubunit bridges in the 70S ribosome. This chain is Large ribosomal subunit protein uL14, found in Borrelia recurrentis (strain A1).